We begin with the raw amino-acid sequence, 115 residues long: Transmembrane protein 14C (115 aa).

4 helical membrane passes run 8 to 28, 33 to 53, 63 to 83, and 88 to 108; these read LVPL…GGII, AGSV…GLGA, VWVF…RFYN, and MPAG…VAKI.

This sequence belongs to the TMEM14 family.

It is found in the mitochondrion membrane. In terms of biological role, required for normal heme biosynthesis. This Rattus norvegicus (Rat) protein is Transmembrane protein 14C (Tmem14c).